A 174-amino-acid polypeptide reads, in one-letter code: Dual-action ribosomal maturation protein DarP (174 aa).

It belongs to the DarP family.

Its subcellular location is the cytoplasm. Member of a network of 50S ribosomal subunit biogenesis factors which assembles along the 30S-50S interface, preventing incorrect 23S rRNA structures from forming. Promotes peptidyl transferase center (PTC) maturation. This Pseudomonas aeruginosa (strain LESB58) protein is Dual-action ribosomal maturation protein DarP.